We begin with the raw amino-acid sequence, 327 residues long: Ubiquinone biosynthesis O-methyltransferase, mitochondrial (327 aa).

Residues Arg-79, Gly-142, Asp-165, and Phe-210 each contribute to the S-adenosyl-L-methionine site. Mg(2+)-binding residues include Glu-211, Glu-214, and His-215.

This sequence belongs to the class I-like SAM-binding methyltransferase superfamily. UbiG/COQ3 family. Component of a multi-subunit COQ enzyme complex, composed of at least COQ3, COQ4, COQ5, COQ6, COQ7 and COQ9. Mg(2+) is required as a cofactor.

Its subcellular location is the mitochondrion inner membrane. It carries out the reaction a 3,4-dihydroxy-5-(all-trans-polyprenyl)benzoate + S-adenosyl-L-methionine = a 4-hydroxy-3-methoxy-5-(all-trans-polyprenyl)benzoate + S-adenosyl-L-homocysteine + H(+). The catalysed reaction is a 3-demethylubiquinone + S-adenosyl-L-methionine = a ubiquinone + S-adenosyl-L-homocysteine. The enzyme catalyses a 3-demethylubiquinol + S-adenosyl-L-methionine = a ubiquinol + S-adenosyl-L-homocysteine + H(+). It functions in the pathway cofactor biosynthesis; ubiquinone biosynthesis. O-methyltransferase required for two non-consecutive steps during ubiquinone biosynthesis. Catalyzes the 2 O-methylation of 3,4-dihydroxy-5-(all-trans-polyprenyl)benzoic acid into 4-hydroxy-3-methoxy-5-(all-trans-polyprenyl)benzoic acid. Also catalyzes the last step of ubiquinone biosynthesis by mediating methylation of 3-demethylubiquinone into ubiquinone. Also able to mediate the methylation of 3-demethylubiquinol into ubiquinol. The protein is Ubiquinone biosynthesis O-methyltransferase, mitochondrial of Candida albicans (Yeast).